The chain runs to 534 residues: CAP-Gly domain-containing linker protein 3 (534 aa).

Over residues 1 to 16 (MTREDLPDSTPEESKL) the composition is skewed to basic and acidic residues. Residues 1–33 (MTREDLPDSTPEESKLPMEFQSPLLEKRRRPVV) are disordered. 3 ANK repeats span residues 107–148 (TDMT…LRSR), 150–173 (TNMN…LLKA), and 187–299 (NHGT…KAGT). A CAP-Gly 1 domain is found at 304–346 (GTTEFASGQWVGVELDEPDGKNDGSVGGIRYFICPPKQGIFAP). The segment at 349–391 (KISKAPDQPPSSVTSTPRTPRVDFSRVTGKGRKEKKATHKKSL) is disordered. Residues 358-367 (PSSVTSTPRT) show a composition bias toward low complexity. Residues 377–390 (GKGRKEKKATHKKS) are compositionally biased toward basic residues. The region spanning 423-465 (GKTDFAPGYWFGIELEKPTGKHDGSVFGVRYFTCSAKNGVFAP) is the CAP-Gly 2 domain. Positions 475-534 (PKDPQTDNNDMKKVHQVTMTQPKRNFTKVRTPKEIASENSMSRILFCCWFPWLLRAEMKS) are goLD.

In terms of assembly, homodimer.

It is found in the cytoplasm. The protein resides in the golgi apparatus. It localises to the golgi stack. Its function is as follows. Functions as a cytoplasmic linker protein. Involved in TGN-endosome dynamics. The chain is CAP-Gly domain-containing linker protein 3 (clip3) from Xenopus laevis (African clawed frog).